Here is a 286-residue protein sequence, read N- to C-terminus: Orotidine 5'-phosphate decarboxylase (286 aa).

Residues Asp-35, 57–59 (KTH), 89–98 (DRKFADIGNT), Tyr-239, and Arg-257 each bind substrate. Residue Lys-91 is the Proton donor of the active site.

Belongs to the OMP decarboxylase family.

The catalysed reaction is orotidine 5'-phosphate + H(+) = UMP + CO2. It participates in pyrimidine metabolism; UMP biosynthesis via de novo pathway; UMP from orotate: step 2/2. This Yarrowia lipolytica (strain CLIB 122 / E 150) (Yeast) protein is Orotidine 5'-phosphate decarboxylase (URA3).